We begin with the raw amino-acid sequence, 485 residues long: MDTRFNDINRVKMGDESKSVDGEVNDNTYYSKTDAEVNFEHRYTTPETRLYKKRWVIVCLFSSYSLCNSYQWIQYGIINNIFMRFYGVDSFTIDWMSMIYMLTYIPLIFPVSWLLDKKGLRVIALVAAALNCAGTWIKVASARPDLFPVTFLGQFTCSVAQVFILGMPSRIASVWFGSDEVSTACSIGVFGNQLGIAIGFLVPPILVPNVDDLDELAAHIRVMFYITAGVATFLFVLVVIVFQERPEIPPTLAQAAARRISPESYSYTASILRLLRNKAFILLVITYGLNVGCFYAVSTLLNRMIIEHYPGEEVNAGRIGLTIVVAGMVGSLICGIWLDRSKTYKQTTLAVYLMSLMGLVIYAFTLDLHHLWVVFITAGALGFFMTGYLPLGFEFAVELTYPESEGTSSGLLNCSAQVFGIIFTICQGKIMDSFGTLAGNLFLCAFLLIGTIITGCIKSDLRRQLANQQAQTADHLDTSPTQTRF.

The Cytoplasmic portion of the chain corresponds to methionine 1–proline 46. The helical transmembrane segment at glutamate 47–glutamine 71 threads the bilayer. Choline is bound by residues asparagine 68 and tryptophan 72. Residues tryptophan 72–aspartate 89 lie on the Extracellular side of the membrane. A helical transmembrane segment spans residues serine 90–lysine 117. Residues lysine 118 to glycine 119 lie on the Cytoplasmic side of the membrane. A helical transmembrane segment spans residues leucine 120–valine 139. Topologically, residues alanine 140–leucine 146 are extracellular. Residues phenylalanine 147–tryptophan 175 form a helical membrane-spanning segment. 2 residues coordinate choline: glutamine 161 and leucine 165. At phenylalanine 176–glutamate 180 the chain is on the cytoplasmic side. A helical membrane pass occupies residues valine 181 to leucine 206. Residues valine 207–aspartate 211 are Extracellular-facing. A helical membrane pass occupies residues aspartate 212–valine 241. Residues phenylalanine 242 to asparagine 277 are Cytoplasmic-facing. Residues lysine 278–histidine 308 traverse the membrane as a helical segment. Tyrosine 295 serves as a coordination point for choline. At tyrosine 309–glutamate 312 the chain is on the extracellular side. A helical transmembrane segment spans residues glutamate 313–serine 341. The Cytoplasmic portion of the chain corresponds to lysine 342–threonine 343. A helical membrane pass occupies residues tyrosine 344 to leucine 366. Residues aspartate 367–histidine 369 lie on the Extracellular side of the membrane. Residues histidine 370–leucine 399 traverse the membrane as a helical segment. Topologically, residues threonine 400–threonine 407 are cytoplasmic. A helical membrane pass occupies residues serine 408–serine 433. Glutamine 417 is a choline binding site. The Extracellular portion of the chain corresponds to phenylalanine 434–glycine 435. A helical membrane pass occupies residues threonine 436 to lysine 458. Over serine 459–phenylalanine 485 the chain is Cytoplasmic.

The protein belongs to the major facilitator superfamily. Feline leukemia virus subgroup C receptor (TC 2.A.1.28.1) family.

The protein resides in the cell membrane. It is found in the mitochondrion membrane. Its subcellular location is the endoplasmic reticulum membrane. The enzyme catalyses choline(out) = choline(in). The catalysed reaction is ethanolamine(in) = ethanolamine(out). It catalyses the reaction heme b(in) = heme b(out). Its function is as follows. Choline uniporter that specifically mediates choline uptake at the blood-brain-barrier. Responsible for the majority of choline uptake across the blood-brain-barrier from the circulation into the brain. Choline, a nutrient critical for brain development, is a precursor of phosphatidylcholine, as well as betaine. Also mediates transport of ethanolamine. Choline and ethanolamine transport is not coupled with proton transport and is exclusively driven by the choline gradient across the plasma membrane. Also acts as a heme b transporter. The polypeptide is Choline/ethanolamine transporter flvcr2b (Danio rerio (Zebrafish)).